Here is a 136-residue protein sequence, read N- to C-terminus: Small ribosomal subunit protein uS9 (136 aa).

Residues 97-136 form a disordered region; it reads SPDNRKPLKTEGHLSRDPRAKERRKYGLKKARKAPQFSKR. A compositionally biased stretch (basic and acidic residues) spans 98–116; the sequence is PDNRKPLKTEGHLSRDPRA. Positions 117 to 136 are enriched in basic residues; the sequence is KERRKYGLKKARKAPQFSKR.

This sequence belongs to the universal ribosomal protein uS9 family.

The protein is Small ribosomal subunit protein uS9 of Prochlorococcus marinus (strain MIT 9301).